A 432-amino-acid chain; its full sequence is MPAIVLIGAQWGDEGKGKATDLLGGRVQWVVRYQGGNNAGHTVVLPSGENFALHLIPSGVLTPGVTNVIGNGVVIDPGVLLSELKGLEDRGVDTSKLLISADAHLLMPYHVAIDKVTERYMGSKKIGTTGRGIGPCYQDKVARMGIRVADVLDTDQLAHKVEAALEFKNQVLVKIYNRKALDPDQVVESLLEQAEGFRHRIADARLLLNNALEAGETVLLEGSQGTLLDVDHGTYPYVTSSNPTAGGAAVGSGIGPTRIRTVLGILKAYTTRVGSGPFPTELFDESGEYLSKTGGEFGVTTGRRRRCGWFDAVIARYATRVNGITDYFLTKLDVLSSLETVPVCVGYEIDGKRTSEMPMTQSDLCRAKPVYEELPGWWEDISAAREFDDLPAKARDYVLRLEEIAGAPVSCIGVGPGRDQTIVRRDILQERA.

GTP-binding positions include 12–18 and 40–42; these read GDEGKGK and GHT. The active-site Proton acceptor is the D13. Mg(2+) is bound by residues D13 and G40. Residues 13 to 16, 38 to 41, T129, R143, Q224, T239, and R303 each bind IMP; these read DEGK and NAGH. H41 serves as the catalytic Proton donor. 299–305 contributes to the substrate binding site; it reads VTTGRRR. Residues R305, 331–333, and 413–415 contribute to the GTP site; these read KLD and GVG.

This sequence belongs to the adenylosuccinate synthetase family. Homodimer. Mg(2+) is required as a cofactor.

Its subcellular location is the cytoplasm. The enzyme catalyses IMP + L-aspartate + GTP = N(6)-(1,2-dicarboxyethyl)-AMP + GDP + phosphate + 2 H(+). Its pathway is purine metabolism; AMP biosynthesis via de novo pathway; AMP from IMP: step 1/2. Plays an important role in the de novo pathway of purine nucleotide biosynthesis. Catalyzes the first committed step in the biosynthesis of AMP from IMP. The chain is Adenylosuccinate synthetase from Mycobacterium marinum (strain ATCC BAA-535 / M).